The sequence spans 522 residues: Maturase K (522 aa).

This sequence belongs to the intron maturase 2 family. MatK subfamily.

It is found in the plastid. The protein localises to the chloroplast. Its function is as follows. Usually encoded in the trnK tRNA gene intron. Probably assists in splicing its own and other chloroplast group II introns. This chain is Maturase K, found in Dianella ensifolia (Flax lily).